Consider the following 393-residue polypeptide: MANQSTETNQPSNMQTYGVPIYAADWIPEVDVRSKIIMDPEKSEDDDESSSSSSSSRSCIVLSGGGGEGRSGISNVILICRVDLNTNSLSEQPLGRLVVGSDLPYRMAVHPREGGLICALPNSCKLFHWEDIMSREDNQAGESEEVIKELRDVGQQLALAFNPEGSVLAAGAEDGTLRVFKWPSMNTLLNESQAHSSVKCLTFSESGQFLVSLGGPVCRVWDVNASAAVASLSKEKDEMFASCRFSVDSAGNEVLYIAANTERGGSIITCDTKLWKRKWSKPIKKNSISAFNVSADGKLLAIGTLEGDVLILESTRMQTIQVVKKAHLGLVTALTFSPDSRGLVSVSFDSRARLTMIEQKGDKPGVRWWLLVLLIVLLYVVAYYYMKAKGIIP.

An N-acetylalanine modification is found at Ala2. At 2-367 (ANQSTETNQP…EQKGDKPGVR (366 aa)) the chain is on the cytoplasmic side. A disordered region spans residues 41–67 (EKSEDDDESSSSSSSSRSCIVLSGGGG). Residue Ser43 is modified to Phosphoserine. WD repeat units follow at residues 151 to 190 (RDVGQQLALAFNPEGSVLAAGAEDGTLRVFKWPSMNTLLN), 193 to 231 (QAHSSVKCLTFSESGQFLVSLGGPVCRVWDVNASAAVAS), 283 to 322 (IKKNSISAFNVSADGKLLAIGTLEGDVLILESTRMQTIQV), and 326 to 367 (AHLG…PGVR). Residues 368–388 (WWLLVLLIVLLYVVAYYYMKA) traverse the membrane as a helical; Signal-anchor for type II membrane protein segment. Residues 389–393 (KGIIP) are Lumenal-facing.

Interacts with BZIP28.

It localises to the endoplasmic reticulum membrane. It is found in the golgi apparatus. The protein resides in the cis-Golgi network membrane. In terms of biological role, required for the formation or budding of transport vesicles from the ER. This is SEC12-like protein 2 (STL2P) from Arabidopsis thaliana (Mouse-ear cress).